A 430-amino-acid chain; its full sequence is Sorting nexin-30 (430 aa).

Over residues 1 to 18 (MSNGGTPRSLPSSGQKSI) the composition is skewed to polar residues. The disordered stretch occupies residues 1–66 (MSNGGTPRSL…SSPASSSSLL (66 aa)). Residues 57 to 66 (SSPASSSSLL) are compositionally biased toward low complexity. The PX domain maps to 80 to 201 (RDLFVTVDDP…AFLSAKDLNK (122 aa)). Residues Arg-123, Gln-125, Lys-153, and Arg-167 each contribute to the a 1,2-diacyl-sn-glycero-3-phospho-(1D-myo-inositol-3-phosphate) site. Positions 223 to 428 (KLRGRPVEFA…LQDKQDAKGE (206 aa)) constitute a BAR domain.

It belongs to the sorting nexin family.

It localises to the early endosome membrane. Its function is as follows. Involved in the regulation of endocytosis and in several stages of intracellular trafficking. Together with snx4, involved in autophagosome assembly. The chain is Sorting nexin-30 (snx30) from Danio rerio (Zebrafish).